Reading from the N-terminus, the 176-residue chain is Ubiquitin-conjugating enzyme E2-20 kDa (176 aa).

The segment covering 1-20 (MDSDMQNQNPHTNSKNSSSA) has biased composition (polar residues). The disordered stretch occupies residues 1–25 (MDSDMQNQNPHTNSKNSSSAGMAVD). Positions 28–175 (SVTKRLRSEL…LMQRYKEIDE (148 aa)) constitute a UBC core domain. Residue Cys-113 is the Glycyl thioester intermediate of the active site.

It belongs to the ubiquitin-conjugating enzyme family.

The catalysed reaction is S-ubiquitinyl-[E1 ubiquitin-activating enzyme]-L-cysteine + [E2 ubiquitin-conjugating enzyme]-L-cysteine = [E1 ubiquitin-activating enzyme]-L-cysteine + S-ubiquitinyl-[E2 ubiquitin-conjugating enzyme]-L-cysteine.. It functions in the pathway protein modification; protein ubiquitination. Its function is as follows. Catalyzes the covalent attachment of ubiquitin to other proteins. This chain is Ubiquitin-conjugating enzyme E2-20 kDa (ubc11), found in Schizosaccharomyces pombe (strain 972 / ATCC 24843) (Fission yeast).